Here is a 710-residue protein sequence, read N- to C-terminus: MVVATTIALYASPPSSVCSTPHQISCDLDLTSRSSSTSSSMASSPQKPIVGGLSSLFSSASVKSSSSSSCSYSTAVDEFSSLRYDRSDDLKDLSFSSSFGYSPAKFVNSFRRDHQSPISVLHGPVSCSCSPPMRMSRDRNLDGSFRLGASRLFNGFVRKALGSCVDYELGSDSGLVDELTFPMEVDTIKPYARDLLRRAQLRHKIFNDESVIKAFYEAEKAHRGQMRASRDPYLQHCVETAMLLANIGANSTVVVAGLLHDTVDDSFMSYDYILRNFGAGVADLVEGVSKLSQLSKLARENNTACKTVEADRLHPMFLAMADARAVLIKLADRLHNMKTLYALSPVKQQRFAKETLEIFAPLANCLGISTWKVQLENLCFKHLYPNQHNEMSTMLEDSFDEAMITSAIEKLDQALKKAGISYHVLCGRHKSLYSIYSKMLKKKLTVDEIHDIHGLRLIVDNEGDCYKALGVVHSLWSEVPGKLKDYITHPKFNGYQSLHTVVMDNGTVPLEVQIRTQEMHLQAEFGFAAHWRYKEGGCKYSSFVLQMVEWARWVVTWHCEAMSKDRSSISSSDSIKPPLQVFRLTLEDCPASYKPNSSQDGPVYVIVIENDKMSVQEFPASSTVSDLLSRAGPGSSRWSMYGIPAKEELRPRLNQIPVSDLKWKLKMGDVVELTPKIPDESLTEYREEIQRMYDRGLAFSRPGTMVGWGS.

The transit peptide at 1–63 (MVVATTIALY…SSLFSSASVK (63 aa)) directs the protein to the chloroplast. An HD domain is found at 233-337 (YLQHCVETAM…IKLADRLHNM (105 aa)).

This sequence belongs to the RelA/SpoT family.

The protein resides in the plastid. The protein localises to the chloroplast. It catalyses the reaction GTP + ATP = guanosine 3'-diphosphate 5'-triphosphate + AMP. In terms of biological role, probable ppGpp (guanosine 3'-diphosphate 5'-diphosphate) synthetase that may be involved in a rapid plant ppGpp-mediated response to pathogens and other stresses. This is Probable GTP diphosphokinase RSH2, chloroplastic (RSH2) from Arabidopsis thaliana (Mouse-ear cress).